A 213-amino-acid chain; its full sequence is Coiled-coil domain-containing protein 43 (213 aa).

The stretch at 119 to 206 (RKEAVLAQYA…ERKDKEKKRT (88 aa)) forms a coiled coil. The tract at residues 127-213 (YANVTDDEDE…KRTQKGERKR (87 aa)) is disordered. Positions 131 to 142 (TDDEDEAEEEEQ) are enriched in acidic residues. A compositionally biased stretch (basic and acidic residues) spans 169-200 (QRDQAKEDAQKKKEQDKMQREKDKLSKQERKD). The span at 201–213 (KEKKRTQKGERKR) shows a compositional bias: basic residues.

The protein belongs to the CCDC43 family.

In Danio rerio (Zebrafish), this protein is Coiled-coil domain-containing protein 43 (ccdc43).